We begin with the raw amino-acid sequence, 107 residues long: U1-lycotoxin-Ls1b (107 aa).

The N-terminal stretch at 1-20 is a signal peptide; it reads MMKVLVVIALLVTLISYSSS. A propeptide spanning residues 21-41 is cleaved from the precursor; that stretch reads EGIDDLEADELLSLMANEQTR. Intrachain disulfides connect Cys-44-Cys-59, Cys-51-Cys-68, Cys-58-Cys-86, and Cys-70-Cys-84.

The protein belongs to the neurotoxin 19 (CSTX) family. 04 (U1-Lctx) subfamily. As to expression, expressed by the venom gland.

The protein localises to the secreted. The sequence is that of U1-lycotoxin-Ls1b from Lycosa singoriensis (Wolf spider).